The chain runs to 331 residues: N-arachidonyl glycine receptor (331 aa).

The Extracellular portion of the chain corresponds to 1–26 (MAIPSNRDQLALSNGSHPEEYKIAAL). N14 is a glycosylation site (N-linked (GlcNAc...) asparagine). Residues 27–47 (VFYSCIFLIGLLVNVTALWVF) form a helical membrane-spanning segment. Residues 48–56 (SCTTKKRTT) are Cytoplasmic-facing. A helical membrane pass occupies residues 57-77 (VTIYMMNVALLDLVFILSLPF). Residues 78 to 95 (RMFYYAKGEWPFGDYFCH) are Extracellular-facing. Residues C94 and C172 are joined by a disulfide bond. A helical transmembrane segment spans residues 96 to 116 (ILGALVVFYPSLALWLLALIS). At 117–138 (ADRYMAIVQPKYAKELKNTGKA) the chain is on the cytoplasmic side. A helical transmembrane segment spans residues 139 to 159 (VLACVGVWIMTLTTTVPLLLL). The Extracellular portion of the chain corresponds to 160–191 (DEDPDKASSPATCLKISDIIHLKAVNVLNFTR). N-linked (GlcNAc...) asparagine glycosylation occurs at N188. Residues 192 to 212 (LIFFFLIPLFIMIGCYVVIIH) form a helical membrane-spanning segment. At 213–236 (SLLRGQTSKLKPKVKEKSIRIIVT) the chain is on the cytoplasmic side. The helical transmembrane segment at 237-257 (LLLQVLACFVPFHICFALLML) threads the bilayer. Residues 258–268 (QGEENSYSPWG) are Extracellular-facing. Residues 269 to 289 (AFTTFLMNLSTCLDVVLYYIV) form a helical membrane-spanning segment. Topologically, residues 290–331 (SKQFQARVISVMLYRNYLRSVRRKSVRSGSLRSLSNMNSEML) are cytoplasmic. The residue at position 322 (S322) is a Phosphoserine.

The protein belongs to the G-protein coupled receptor 1 family. In terms of tissue distribution, expressed in testis, spleen and brain (at protein level).

Its subcellular location is the cell membrane. It localises to the cytoplasmic vesicle membrane. Functionally, g protein-coupled receptor (GPCR) that plays a role in diverse physiological processes particularly within the immune and nervous systems. Becomes active when triggered by various endogenous ligands including endocannabinoid N-arachidonyl glycine (NAGly), delta-9-tetrahydrocannabinol or resolvin D2/RvD2 derived from the omega-3 fatty acid docosahexaenoic acid (DHA). Upon RvD2 binding, facilitates the resolution of inflammation, aiding in tissue repair and homeostasis. Mechanistically, RvD2 ligation initiates Galphas protein coupling, activation of cAMP-PKA signaling pathway and phosphorylation of STAT3, leading to RvD2-stimulated macrophage phagocytosis. Mediates NAGly-induced process of reorganization of actin filaments and induction of acrosomal exocytosis. Activation by N-arachidonoyl glycine (NAGly) can also induce apoptosis in macrophages. Plays a role in homeostasis of CD8+ subsets of intraepithelial lymphocytes (IELs) (CD8alphaalpha and CD8alphabeta IELs) in small intestine by supporting preferential migration of CD8alphaalpha T-cells to intraepithelial compartment over lamina propria compartment, and by mediating their reconstitution into small intestine after bone marrow transplant. Participates also in hypotensive responses, mediating reduction in intraocular and blood pressure. The protein is N-arachidonyl glycine receptor of Rattus norvegicus (Rat).